A 218-amino-acid polypeptide reads, in one-letter code: uncharacterized protein (218 aa).

This is an uncharacterized protein from Acanthamoeba polyphaga (Amoeba).